The following is a 406-amino-acid chain: Protein ALP1-like (406 aa).

A Nuclear localization signal motif is present at residues 8–15; the sequence is KKKKRAEK. Residues 187–353 enclose the DDE Tnp4 domain; sequence IDITHIVMNL…IIFVCCLLHN (167 aa). Asp188, Asp240, and Asp279 together coordinate a divalent metal cation.

This sequence belongs to the HARBI1 family. A divalent metal cation is required as a cofactor.

The protein resides in the nucleus. Transposase-derived protein that may have nuclease activity. This chain is Protein ALP1-like, found in Arabidopsis thaliana (Mouse-ear cress).